The chain runs to 335 residues: Homeobox protein DBX1 (335 aa).

Disordered regions lie at residues 56-102 and 240-335; these read RSIP…LSPA and KERE…ITVS. Residues 83–95 are compositionally biased toward low complexity; sequence GSPGSGSRRGSSP. A DNA-binding region (homeobox) is located at residues 181–240; it reads GMLRRAVFSDVQRKALEKTFQKQKYISKPDRKKLASKLGLKDSQVKIWFQNRRMKWRNSK. Low complexity predominate over residues 299-317; that stretch reads GPLPASPAHSSSPGKPSDF. Residues 318-335 are compositionally biased toward acidic residues; the sequence is SDSDEDEEGEEDEEITVS.

Belongs to the H2.0 homeobox family.

Its subcellular location is the nucleus. Functionally, could have a role in patterning the central nervous system during embryogenesis. Has a key role in regulating the distinct phenotypic features that distinguish two major classes of ventral interneurons, V0 and V1 neurons. Regulates the transcription factor profile, neurotransmitter phenotype, intraspinal migratory path and axonal trajectory of V0 neurons, features that differentiate them from an adjacent set of V1 neurons. The polypeptide is Homeobox protein DBX1 (Dbx1) (Rattus norvegicus (Rat)).